The primary structure comprises 872 residues: Alanine--tRNA ligase (872 aa).

Positions 567, 571, 669, and 673 each coordinate Zn(2+).

Belongs to the class-II aminoacyl-tRNA synthetase family. Zn(2+) is required as a cofactor.

It is found in the cytoplasm. The enzyme catalyses tRNA(Ala) + L-alanine + ATP = L-alanyl-tRNA(Ala) + AMP + diphosphate. In terms of biological role, catalyzes the attachment of alanine to tRNA(Ala) in a two-step reaction: alanine is first activated by ATP to form Ala-AMP and then transferred to the acceptor end of tRNA(Ala). Also edits incorrectly charged Ser-tRNA(Ala) and Gly-tRNA(Ala) via its editing domain. This chain is Alanine--tRNA ligase, found in Streptococcus agalactiae serotype Ia (strain ATCC 27591 / A909 / CDC SS700).